A 368-amino-acid polypeptide reads, in one-letter code: 4-hydroxy-3-methylbut-2-en-1-yl diphosphate synthase (flavodoxin) (368 aa).

The [4Fe-4S] cluster site is built by Cys-271, Cys-274, Cys-306, and Glu-313.

The protein belongs to the IspG family. [4Fe-4S] cluster serves as cofactor.

The enzyme catalyses (2E)-4-hydroxy-3-methylbut-2-enyl diphosphate + oxidized [flavodoxin] + H2O + 2 H(+) = 2-C-methyl-D-erythritol 2,4-cyclic diphosphate + reduced [flavodoxin]. It functions in the pathway isoprenoid biosynthesis; isopentenyl diphosphate biosynthesis via DXP pathway; isopentenyl diphosphate from 1-deoxy-D-xylulose 5-phosphate: step 5/6. Its function is as follows. Converts 2C-methyl-D-erythritol 2,4-cyclodiphosphate (ME-2,4cPP) into 1-hydroxy-2-methyl-2-(E)-butenyl 4-diphosphate. The chain is 4-hydroxy-3-methylbut-2-en-1-yl diphosphate synthase (flavodoxin) from Histophilus somni (strain 129Pt) (Haemophilus somnus).